The following is a 345-amino-acid chain: tRNA pseudouridine synthase B (345 aa).

Aspartate 39 (nucleophile) is an active-site residue.

It belongs to the pseudouridine synthase TruB family. Type 1 subfamily.

It carries out the reaction uridine(55) in tRNA = pseudouridine(55) in tRNA. Responsible for synthesis of pseudouridine from uracil-55 in the psi GC loop of transfer RNAs. The sequence is that of tRNA pseudouridine synthase B from Rickettsia africae (strain ESF-5).